The sequence spans 547 residues: Chaperonin GroEL 1 (547 aa).

ATP-binding positions include 30-33 (TLGP), K51, 87-91 (DGTTT), G415, 479-481 (NAA), and D495. Residues 525–547 (PKKKGAPAGGGMGGMGGMDEMDY) form a disordered region. Gly residues predominate over residues 531–541 (PAGGGMGGMGG).

The protein belongs to the chaperonin (HSP60) family. Forms a cylinder of 14 subunits composed of two heptameric rings stacked back-to-back. Interacts with the co-chaperonin GroES.

The protein resides in the cytoplasm. It carries out the reaction ATP + H2O + a folded polypeptide = ADP + phosphate + an unfolded polypeptide.. Functionally, together with its co-chaperonin GroES, plays an essential role in assisting protein folding. The GroEL-GroES system forms a nano-cage that allows encapsulation of the non-native substrate proteins and provides a physical environment optimized to promote and accelerate protein folding. The protein is Chaperonin GroEL 1 of Anaeromyxobacter sp. (strain Fw109-5).